The chain runs to 775 residues: Outer capsid protein VP4 (775 aa).

The spike head stretch occupies residues 65–224 (LDGPYQPTTF…KCTEYINNGL (160 aa)). Cys-203 and Cys-216 are joined by a disulfide. The interval 248–479 (AQPNQDIVVS…LISLVPSNDD (232 aa)) is spike body and stalk (antigen domain). Residues 308–310 (DGE) carry the DGE motif; interaction with ITGA2/ITGB1 heterodimer motif. A disulfide bridge connects residues Cys-318 and Cys-380. The segment at 389–409 (LPVGNYPVMTGGAVSLHSAGV) is hydrophobic; possible role in virus entry into host cell. The short motif at 448-450 (YGL) is the YGL motif; interaction with ITGA4 element. A coiled-coil region spans residues 484 to 518 (IINSVTVRQDLERQLGELRDEFNNLSQQIAMSQLI). The tract at residues 510–775 (QQIAMSQLID…IESLIMQCRL (266 aa)) is spike foot. A KID motif; interaction with HSPA8 motif is present at residues 644-646 (KID).

Belongs to the rotavirus VP4 family. In terms of assembly, homotrimer. VP4 adopts a dimeric appearance above the capsid surface, while forming a trimeric base anchored inside the capsid layer. Only hints of the third molecule are observed above the capsid surface. It probably performs a series of molecular rearrangements during viral entry. Prior to trypsin cleavage, it is flexible. The priming trypsin cleavage triggers its rearrangement into rigid spikes with approximate two-fold symmetry of their protruding parts. After an unknown second triggering event, cleaved VP4 may undergo another rearrangement, in which two VP5* subunits fold back on themselves and join a third subunit to form a tightly associated trimer, shaped like a folded umbrella. Interacts with VP6. Interacts with VP7. As to quaternary structure, homotrimer. The trimer is coiled-coil stabilized by its C-terminus, however, its N-terminus, known as antigen domain or 'body', seems to be flexible allowing it to self-associate either as a dimer or a trimer. Proteolytic cleavage by trypsin results in activation of VP4 functions and greatly increases infectivity. The penetration into the host cell is dependent on trypsin treatment of VP4. It produces two peptides, VP5* and VP8* that remain associated with the virion. Cleavage of VP4 by trypsin probably occurs in vivo in the lumen of the intestine prior to infection of enterocytes. Trypsin seems to be incorporated into the three-layered viral particles but remains inactive as long as the viral outer capsid is intact and would only be activated upon the solubilization of the latter.

It localises to the virion. It is found in the host rough endoplasmic reticulum. The protein localises to the host cell membrane. The protein resides in the host cytoplasm. Its subcellular location is the host cytoskeleton. It localises to the host endoplasmic reticulum-Golgi intermediate compartment. Its function is as follows. Spike-forming protein that mediates virion attachment to the host epithelial cell receptors and plays a major role in cell penetration, determination of host range restriction and virulence. Rotavirus attachment and entry into the host cell probably involves multiple sequential contacts between the outer capsid proteins VP4 and VP7, and the cell receptors. It is subsequently lost, together with VP7, following virus entry into the host cell. Following entry into the host cell, low intracellular or intravesicular Ca(2+) concentration probably causes the calcium-stabilized VP7 trimers to dissociate from the virion. This step is probably necessary for the membrane-disrupting entry step and the release of VP4, which is locked onto the virion by VP7. During the virus exit from the host cell, VP4 seems to be required to target the newly formed virions to the host cell lipid rafts. Functionally, forms the spike 'foot' and 'body' and acts as a membrane permeabilization protein that mediates release of viral particles from endosomal compartments into the cytoplasm. During entry, the part of VP5* that protrudes from the virus folds back on itself and reorganizes from a local dimer to a trimer. This reorganization may be linked to membrane penetration by exposing VP5* hydrophobic region. In integrin-dependent strains, VP5* targets the integrin heterodimer ITGA2/ITGB1 for cell attachment. Forms the head of the spikes and mediates the recognition of specific host cell surface glycans. It is the viral hemagglutinin and an important target of neutralizing antibodies. In sialic acid-dependent strains, VP8* binds to host cell sialic acid, most probably a ganglioside, providing the initial contact. In some other strains, VP8* mediates the attachment to histo-blood group antigens (HBGAs) for viral entry. This chain is Outer capsid protein VP4, found in Rotavirus A (strain RVA/Cow/United States/NCDV-Lincoln/1969/G6P6[1]) (RV-A).